A 197-amino-acid polypeptide reads, in one-letter code: Holliday junction branch migration complex subunit RuvA (197 aa).

The tract at residues 1–63 is domain I; the sequence is MYAYLKGIIT…EDAHLLYGFR (63 aa). The segment at 64-142 is domain II; that stretch reads SEDEKKLFLS…VAGDGLPAKV (79 aa). A flexible linker region spans residues 143–147; sequence AVQAS. The interval 148–197 is domain III; the sequence is AENQELEEAMEAMLALGYKATELKKIKKFFEGTTDTAENYIKSALKMLVK.

Belongs to the RuvA family. In terms of assembly, homotetramer. Forms an RuvA(8)-RuvB(12)-Holliday junction (HJ) complex. HJ DNA is sandwiched between 2 RuvA tetramers; dsDNA enters through RuvA and exits via RuvB. An RuvB hexamer assembles on each DNA strand where it exits the tetramer. Each RuvB hexamer is contacted by two RuvA subunits (via domain III) on 2 adjacent RuvB subunits; this complex drives branch migration. In the full resolvosome a probable DNA-RuvA(4)-RuvB(12)-RuvC(2) complex forms which resolves the HJ.

The protein resides in the cytoplasm. In terms of biological role, the RuvA-RuvB-RuvC complex processes Holliday junction (HJ) DNA during genetic recombination and DNA repair, while the RuvA-RuvB complex plays an important role in the rescue of blocked DNA replication forks via replication fork reversal (RFR). RuvA specifically binds to HJ cruciform DNA, conferring on it an open structure. The RuvB hexamer acts as an ATP-dependent pump, pulling dsDNA into and through the RuvAB complex. HJ branch migration allows RuvC to scan DNA until it finds its consensus sequence, where it cleaves and resolves the cruciform DNA. The sequence is that of Holliday junction branch migration complex subunit RuvA from Streptococcus pneumoniae serotype 2 (strain D39 / NCTC 7466).